The sequence spans 83 residues: Small ribosomal subunit protein bS16 (83 aa).

This sequence belongs to the bacterial ribosomal protein bS16 family.

This chain is Small ribosomal subunit protein bS16, found in Aromatoleum aromaticum (strain DSM 19018 / LMG 30748 / EbN1) (Azoarcus sp. (strain EbN1)).